The primary structure comprises 478 residues: MGRCCFYTAGTLSLLLLVTSVTLLVARVFQKAVDQSIEKKIVLRNGTEAFDSWEKPPLPVYTQFYFFNVTNPEEILRGETPRVEEVGPYTYRELRNKANIQFGDNGTTISAVSNKAYVFERDQSVGDPKIDLIRTLNIPVLTVIEWSQVHFLREIIEAMLKAYQQKLFVTHTVDELLWGYKDEILSLIHVFRPDISPYFGLFYEKNGTNDGDYVFLTGEDSYLNFTKIVEWNGKTSLDWWITDKCNMINGTDGDSFHPLITKDEVLYVFPSDFCRSVYITFSDYESVQGLPAFRYKVPAEILANTSDNAGFCIPEGNCLGSGVLNVSICKNGAPIIMSFPHFYQADERFVSAIEGMHPNQEDHETFVDINPLTGIILKAAKRFQINIYVKKLDDFVETGDIRTMVFPVMYLNESVHIDKETASRLKSMINTTLIITNIPYIIMALGVFFGLVFTWLACKGQGSMDEGTADERAPLIRT.

Residues 1–4 (MGRC) lie on the Cytoplasmic side of the membrane. The helical transmembrane segment at 5-27 (CFYTAGTLSLLLLVTSVTLLVAR) threads the bilayer. Residues 28-433 (VFQKAVDQSI…RLKSMINTTL (406 aa)) lie on the Lumenal side of the membrane. Residues asparagine 45, asparagine 68, and asparagine 105 are each glycosylated (N-linked (GlcNAc...) asparagine). An important for interaction with GBA1 region spans residues 155–191 (IIEAMLKAYQQKLFVTHTVDELLWGYKDEILSLIHVF). N-linked (GlcNAc...) asparagine glycosylation is found at asparagine 206, asparagine 224, asparagine 249, and asparagine 304. 2 disulfides stabilise this stretch: cysteine 274/cysteine 329 and cysteine 312/cysteine 318. Asparagine 325, asparagine 412, and asparagine 430 each carry an N-linked (GlcNAc...) asparagine glycan. A helical transmembrane segment spans residues 434–459 (IITNIPYIIMALGVFFGLVFTWLACK). Over 460–478 (GQGSMDEGTADERAPLIRT) the chain is Cytoplasmic.

Belongs to the CD36 family. Interacts with GBA1. As to quaternary structure, (Microbial infection) Interacts with enterovirus 71 capsid proteins VP1 and VP2.

It localises to the lysosome membrane. Acts as a lysosomal receptor for glucosylceramidase (GBA1) targeting. In terms of biological role, (Microbial infection) Acts as a receptor for enterovirus 71. This Homo sapiens (Human) protein is Lysosome membrane protein 2 (SCARB2).